The following is an 878-amino-acid chain: Alanine--tRNA ligase (878 aa).

4 residues coordinate Zn(2+): His567, His571, Cys668, and His672.

This sequence belongs to the class-II aminoacyl-tRNA synthetase family. Zn(2+) is required as a cofactor.

Its subcellular location is the cytoplasm. The catalysed reaction is tRNA(Ala) + L-alanine + ATP = L-alanyl-tRNA(Ala) + AMP + diphosphate. Its function is as follows. Catalyzes the attachment of alanine to tRNA(Ala) in a two-step reaction: alanine is first activated by ATP to form Ala-AMP and then transferred to the acceptor end of tRNA(Ala). Also edits incorrectly charged Ser-tRNA(Ala) and Gly-tRNA(Ala) via its editing domain. This chain is Alanine--tRNA ligase, found in Magnetococcus marinus (strain ATCC BAA-1437 / JCM 17883 / MC-1).